Reading from the N-terminus, the 264-residue chain is MAATGEALTPQGYIQHHLTNLSVGEGFWTWHIDSLLFSVGLGVLFLWLFRSVGKKATTGVPGKLQCFVEMIIEFVDSSVKETFHGRNPVIAPLALTIFVWVFMMNFMDMVPVDWIPSLAAAAGIPYMKVVPTTDLNITFSMAIGVFLLIIYYSIKVKGISGFVKELTMQPFNHWAMIPVNFLLETVTLIAKPISLALRLFGNLYAGELIFILIALMYGANMALSALGVTLQLGWLIFHILVITLQAFIFMMLTIVYLSMAHEDH.

6 consecutive transmembrane segments (helical) span residues Thr29–Phe49, Val89–Met109, Asp134–Ile154, Ile177–Leu197, Leu208–Val228, and Leu235–Val255.

Belongs to the ATPase A chain family. As to quaternary structure, F-type ATPases have 2 components, CF(1) - the catalytic core - and CF(0) - the membrane proton channel. CF(1) has five subunits: alpha(3), beta(3), gamma(1), delta(1), epsilon(1). CF(0) has three main subunits: a(1), b(2) and c(9-12). The alpha and beta chains form an alternating ring which encloses part of the gamma chain. CF(1) is attached to CF(0) by a central stalk formed by the gamma and epsilon chains, while a peripheral stalk is formed by the delta and b chains.

The protein localises to the cell inner membrane. Its function is as follows. Key component of the proton channel; it plays a direct role in the translocation of protons across the membrane. The sequence is that of ATP synthase subunit a from Shewanella sediminis (strain HAW-EB3).